We begin with the raw amino-acid sequence, 259 residues long: UPF0246 protein PBPRA0561 (259 aa).

Belongs to the UPF0246 family.

The sequence is that of UPF0246 protein PBPRA0561 from Photobacterium profundum (strain SS9).